Consider the following 170-residue polypeptide: Large ribosomal subunit protein uL11 (170 aa).

This sequence belongs to the universal ribosomal protein uL11 family. In terms of assembly, part of the ribosomal stalk of the 50S ribosomal subunit. Interacts with L10 and the large rRNA to form the base of the stalk. L10 forms an elongated spine to which L12 dimers bind in a sequential fashion forming a multimeric L10(L12)X complex.

Its function is as follows. Forms part of the ribosomal stalk which helps the ribosome interact with GTP-bound translation factors. In Desulfurococcus amylolyticus (strain DSM 18924 / JCM 16383 / VKM B-2413 / 1221n) (Desulfurococcus kamchatkensis), this protein is Large ribosomal subunit protein uL11.